The chain runs to 844 residues: E3 ubiquitin-protein ligase BRE1-like 2 (844 aa).

Coiled coils occupy residues 1–38 (MDAA…RDEQ) and 160–240 (EDVI…QLQT). The segment at 244-269 (SLMNTSAPNGVNGSVSTDKSSDKGMG) is disordered. The segment covering 245-261 (LMNTSAPNGVNGSVSTD) has biased composition (polar residues). Coiled-coil stretches lie at residues 290 to 604 (ELHE…SEIE) and 640 to 670 (KMKQ…ESSK). The RING-type zinc-finger motif lies at 792–831 (CGVCFDRPKEVVITKCFHLFCSPCIQRNLEIRHRKCPGCG).

This sequence belongs to the BRE1 family.

It localises to the nucleus. The catalysed reaction is S-ubiquitinyl-[E2 ubiquitin-conjugating enzyme]-L-cysteine + [acceptor protein]-L-lysine = [E2 ubiquitin-conjugating enzyme]-L-cysteine + N(6)-ubiquitinyl-[acceptor protein]-L-lysine.. It participates in protein modification; protein ubiquitination. Its function is as follows. E3 ubiquitin-protein ligase that monoubiquitinates H2B to form H2BK143ub1. H2BK143ub1 gives a specific tag for epigenetic transcriptional activation and is also prerequisite for H3K4me and maybe H3K79me. It thereby plays a central role in histone code and gene regulation. Forms a ubiquitin ligase complex in cooperation with the E2 enzyme UBC2/RAD6. In Oryza sativa subsp. indica (Rice), this protein is E3 ubiquitin-protein ligase BRE1-like 2 (BRE1B).